Consider the following 182-residue polypeptide: Adenine phosphoribosyltransferase (182 aa).

This sequence belongs to the purine/pyrimidine phosphoribosyltransferase family. As to quaternary structure, homodimer.

It localises to the cytoplasm. It carries out the reaction AMP + diphosphate = 5-phospho-alpha-D-ribose 1-diphosphate + adenine. It participates in purine metabolism; AMP biosynthesis via salvage pathway; AMP from adenine: step 1/1. Its function is as follows. Catalyzes a salvage reaction resulting in the formation of AMP, that is energically less costly than de novo synthesis. The protein is Adenine phosphoribosyltransferase of Shewanella frigidimarina (strain NCIMB 400).